The primary structure comprises 194 residues: Archaetidylinositol phosphate synthase (194 aa).

Helical transmembrane passes span 32–51 and 58–78; these read IYTLASPVAAAAALPAWLYI and LLIALSLLLDAVDGAVARFTG. Positions 67, 70, 88, and 92 each coordinate Mg(2+). Asp-92 acts as the Proton acceptor in catalysis. The next 3 helical transmembrane spans lie at 103 to 123, 150 to 170, and 172 to 192; these read LYIAGVHPLIVIAMLSGGLIV, IAILAILAISIYNLQTALALA, and AAAVLVWITVIQRMVYIAGEL.

It belongs to the CDP-alcohol phosphatidyltransferase class-I family. Requires Mn(2+) as cofactor. Mg(2+) serves as cofactor.

It is found in the cell membrane. It catalyses the reaction CDP-2,3-bis-O-(phytanyl)-sn-glycerol + 1D-myo-inositol 3-phosphate = saturated 1-archaetidyl-1D-myo-inositol 3-phosphate + CMP + H(+). It functions in the pathway lipid metabolism; phospholipid metabolism. Functionally, catalyzes the formation of archaetidylinositol phosphate (AIP) from CDP-archaeol (CDP-ArOH or CDP-2,3-bis-(O-phytanyl)-sn-glycerol) and 1L-myo-inositol 1-phosphate (IP or 1D-myo-inositol 3-phosphate). AIP is a precursor of archaetidyl-myo-inositol (AI), an ether-type inositol phospholipid ubiquitously distributed in archaea membranes and essential for glycolipid biosynthesis in archaea. The chain is Archaetidylinositol phosphate synthase from Aeropyrum pernix (strain ATCC 700893 / DSM 11879 / JCM 9820 / NBRC 100138 / K1).